The primary structure comprises 276 residues: Kallikrein-10 (276 aa).

The N-terminal stretch at 1–30 (MRAPHLHLSAASGARALAKLLPLLMAQLWA) is a signal peptide. An N-linked (GlcNAc...) asparagine glycan is attached at Asn39. The region spanning 47–274 (AYGSPCARGS…YMSWINKVIR (228 aa)) is the Peptidase S1 domain. Cystine bridges form between Cys52-Cys162, Cys71-Cys87, Cys169-Cys235, Cys201-Cys215, and Cys225-Cys250. Active-site charge relay system residues include His86 and Asp137. Ser229 (charge relay system) is an active-site residue.

Belongs to the peptidase S1 family. Kallikrein subfamily. As to expression, expressed in breast, ovary and prostate.

The protein localises to the secreted. Functionally, has a tumor-suppressor role for NES1 in breast and prostate cancer. The polypeptide is Kallikrein-10 (KLK10) (Homo sapiens (Human)).